We begin with the raw amino-acid sequence, 220 residues long: Redox-sensing transcriptional repressor Rex (220 aa).

The H-T-H motif DNA-binding region spans 16 to 55; it reads MYVQVLETLKREGSQVVSSELLARTCSVNPSQIRKDLAYF. 90 to 95 is an NAD(+) binding site; the sequence is GIGNLG.

This sequence belongs to the transcriptional regulatory Rex family. As to quaternary structure, homodimer.

Its subcellular location is the cytoplasm. In terms of biological role, modulates transcription in response to changes in cellular NADH/NAD(+) redox state. This chain is Redox-sensing transcriptional repressor Rex, found in Solidesulfovibrio magneticus (strain ATCC 700980 / DSM 13731 / RS-1) (Desulfovibrio magneticus).